A 984-amino-acid polypeptide reads, in one-letter code: Serine/threonine-protein kinase N2 (984 aa).

S21 carries the phosphoserine modification. Positions 33 to 109 (KLDFSDTMVQ…LQELNAHIVV (77 aa)) constitute an REM-1 1 domain. K77 is subject to N6-acetyllysine. Position 110 is a phosphoserine (S110). The tract at residues 114–133 (DITDCPRTPDTPNNDPRCST) is disordered. A phosphothreonine mark is found at T121 and T124. 2 consecutive REM-1 domains span residues 121–203 (TPDT…TNEL) and 204–284 (AFDN…EVPK). Positions 123–133 (DTPNNDPRCST) are enriched in polar residues. Phosphoserine occurs at positions 302, 306, 360, and 362. A disordered region spans residues 351 to 383 (ATSVALPGWSPSETRSSFMSRTSKSKSGSSRNL). In terms of domain architecture, C2 spans 353–473 (SVALPGWSPS…LYLEPQGTLF (121 aa)). The span at 364–381 (TRSSFMSRTSKSKSGSSR) shows a compositional bias: low complexity. Residues 382-463 (NLLKTDDLSN…FLDNQRHGMC (82 aa)) form a necessary to rescue apical junction formation region. Phosphoserine is present on residues S535, S583, and S620. The interval 558 to 584 (ASDSTVTKLDFDLEPEPPPAPPRASSL) is disordered. Phosphothreonine is present on T628. Residue S631 is modified to Phosphoserine. The 260-residue stretch at 657-916 (FRCCAVLGRG…AEDVKKHPFF (260 aa)) folds into the Protein kinase domain. ATP-binding positions include 663-671 (LGRGHFGKV) and K686. D782 functions as the Proton acceptor in the catalytic mechanism. At T816 the chain carries Phosphothreonine; by PDPK1. The segment at 917 to 977 (RLIDWSALMD…EEEQEMFRDF (61 aa)) is necessary for the catalytic activity. Residues 917 to 984 (RLIDWSALMD…RDFDYIADWC (68 aa)) form the AGC-kinase C-terminal domain. S952 carries the phosphoserine modification. T958 carries the phosphothreonine modification. The interval 978-984 (DYIADWC) is negatively regulates the responsiveness of the catalytic activity by cardiolipin and is required for optimal activation by the GTP-bound RhoA.

It belongs to the protein kinase superfamily. AGC Ser/Thr protein kinase family. PKC subfamily. As to quaternary structure, interacts (via the REM repeats) with RHOA (GTP-bound form preferentially) and interacts (via the REM repeats) with RAC1 (GTP-bound form preferentially); the interactions induce its autophosphorylation. Interacts with RHOC. Interacts with NCK1 and NCK2. Interacts with NCK1 (via SH3 domains). Interacts with CD44. Interacts (via C-terminal kinase domain) with PDPK1; the interaction stimulates PDPK1 kinase activity. Interacts with MAP3K2; the interaction activates PRK2 kinase activity in a MAP3K2-independent kinase activity. Interacts (via C-terminal domain) with AKT1; the interaction occurs with the C-terminal cleavage product of PRK2 in apoptotic cells. Interacts (via C-terminus) with PTPN13 (via PDZ 3 domain). Interacts with CDK10. (Microbial infection) Interacts with HCV NS5B (via N-terminal finger domain). Autophosphorylated. Phosphorylated during mitosis. Phosphorylated by CDK10. In terms of processing, activated by limited proteolysis with trypsin. Proteolytically cleaved by caspase-3 during the induction of apoptotic cell death. In terms of tissue distribution, ubiquitous. Expressed in numerous tumor cell lines, especially in bladder tumor cells.

It is found in the cytoplasm. It localises to the nucleus. The protein localises to the membrane. Its subcellular location is the cell projection. The protein resides in the lamellipodium. It is found in the cytoskeleton. It localises to the cleavage furrow. The protein localises to the midbody. Its subcellular location is the cell junction. It catalyses the reaction L-seryl-[protein] + ATP = O-phospho-L-seryl-[protein] + ADP + H(+). It carries out the reaction L-threonyl-[protein] + ATP = O-phospho-L-threonyl-[protein] + ADP + H(+). With respect to regulation, kinase activity is activated upon binding to GTP-bound Rhoa/Rac1 GTPases. Activated by caspase-3 (CASP3) cleavage during apoptosis. Activated by lipids, particularly cardiolipin and to a lesser extent by other acidic phospholipids and unsaturated fatty acids. Two specific sites, Thr-816 (activation loop of the kinase domain) and Thr-958 (turn motif), need to be phosphorylated for its full activation. Its function is as follows. PKC-related serine/threonine-protein kinase and Rho/Rac effector protein that participates in specific signal transduction responses in the cell. Plays a role in the regulation of cell cycle progression, actin cytoskeleton assembly, cell migration, cell adhesion, tumor cell invasion and transcription activation signaling processes. Phosphorylates CTTN in hyaluronan-induced astrocytes and hence decreases CTTN ability to associate with filamentous actin. Phosphorylates HDAC5, therefore lead to impair HDAC5 import. Direct RhoA target required for the regulation of the maturation of primordial junctions into apical junction formation in bronchial epithelial cells. Required for G2/M phases of the cell cycle progression and abscission during cytokinesis in a ECT2-dependent manner. Stimulates FYN kinase activity that is required for establishment of skin cell-cell adhesion during keratinocytes differentiation. Regulates epithelial bladder cells speed and direction of movement during cell migration and tumor cell invasion. Inhibits Akt pro-survival-induced kinase activity. Mediates Rho protein-induced transcriptional activation via the c-fos serum response factor (SRF). Involved in the negative regulation of ciliogenesis. Functionally, (Microbial infection) Phosphorylates HCV NS5B leading to stimulation of HCV RNA replication. The sequence is that of Serine/threonine-protein kinase N2 (PKN2) from Homo sapiens (Human).